A 75-amino-acid polypeptide reads, in one-letter code: Cytochrome c oxidase subunit 6C (75 aa).

At 1 to 13 the chain is on the mitochondrial matrix side; that stretch reads MASSALAKPQMRG. A helical membrane pass occupies residues 14–54; it reads LLARRLRIHIVGAFVVSLGVAAFYKYAVAEPRKKAYADFYR. Residues 55–75 lie on the Mitochondrial intermembrane side of the membrane; that stretch reads NYDSVKYFEEMRKAGVFQSVK.

It belongs to the cytochrome c oxidase subunit 6c family. In terms of assembly, component of the cytochrome c oxidase (complex IV, CIV), a multisubunit enzyme composed of 14 subunits. The complex is composed of a catalytic core of 3 subunits MT-CO1, MT-CO2 and MT-CO3, encoded in the mitochondrial DNA, and 11 supernumerary subunits COX4I, COX5A, COX5B, COX6A, COX6B, COX6C, COX7A, COX7B, COX7C, COX8 and NDUFA4, which are encoded in the nuclear genome. The complex exists as a monomer or a dimer and forms supercomplexes (SCs) in the inner mitochondrial membrane with NADH-ubiquinone oxidoreductase (complex I, CI) and ubiquinol-cytochrome c oxidoreductase (cytochrome b-c1 complex, complex III, CIII), resulting in different assemblies (supercomplex SCI(1)III(2)IV(1) and megacomplex MCI(2)III(2)IV(2)).

Its subcellular location is the mitochondrion inner membrane. It functions in the pathway energy metabolism; oxidative phosphorylation. Component of the cytochrome c oxidase, the last enzyme in the mitochondrial electron transport chain which drives oxidative phosphorylation. The respiratory chain contains 3 multisubunit complexes succinate dehydrogenase (complex II, CII), ubiquinol-cytochrome c oxidoreductase (cytochrome b-c1 complex, complex III, CIII) and cytochrome c oxidase (complex IV, CIV), that cooperate to transfer electrons derived from NADH and succinate to molecular oxygen, creating an electrochemical gradient over the inner membrane that drives transmembrane transport and the ATP synthase. Cytochrome c oxidase is the component of the respiratory chain that catalyzes the reduction of oxygen to water. Electrons originating from reduced cytochrome c in the intermembrane space (IMS) are transferred via the dinuclear copper A center (CU(A)) of subunit 2 and heme A of subunit 1 to the active site in subunit 1, a binuclear center (BNC) formed by heme A3 and copper B (CU(B)). The BNC reduces molecular oxygen to 2 water molecules using 4 electrons from cytochrome c in the IMS and 4 protons from the mitochondrial matrix. The chain is Cytochrome c oxidase subunit 6C (COX6C) from Nycticebus coucang (Slow loris).